A 349-amino-acid polypeptide reads, in one-letter code: Methylthioribose-1-phosphate isomerase (349 aa).

Residues 49–51, arginine 93, and glutamine 201 each bind substrate; that span reads RGA. Catalysis depends on aspartate 242, which acts as the Proton donor. 252–253 is a binding site for substrate; it reads NK.

It belongs to the EIF-2B alpha/beta/delta subunits family. MtnA subfamily.

It catalyses the reaction 5-(methylsulfanyl)-alpha-D-ribose 1-phosphate = 5-(methylsulfanyl)-D-ribulose 1-phosphate. The protein operates within amino-acid biosynthesis; L-methionine biosynthesis via salvage pathway; L-methionine from S-methyl-5-thio-alpha-D-ribose 1-phosphate: step 1/6. Its function is as follows. Catalyzes the interconversion of methylthioribose-1-phosphate (MTR-1-P) into methylthioribulose-1-phosphate (MTRu-1-P). The chain is Methylthioribose-1-phosphate isomerase from Petrotoga mobilis (strain DSM 10674 / SJ95).